We begin with the raw amino-acid sequence, 313 residues long: Aspartate carbamoyltransferase catalytic subunit (313 aa).

The carbamoyl phosphate site is built by Arg-58 and Thr-59. Lys-86 contacts L-aspartate. Positions 108, 136, and 139 each coordinate carbamoyl phosphate. Residues Arg-169 and Arg-223 each contribute to the L-aspartate site. The carbamoyl phosphate site is built by Gly-265 and Pro-266.

It belongs to the aspartate/ornithine carbamoyltransferase superfamily. ATCase family. In terms of assembly, heterododecamer (2C3:3R2) of six catalytic PyrB chains organized as two trimers (C3), and six regulatory PyrI chains organized as three dimers (R2).

It carries out the reaction carbamoyl phosphate + L-aspartate = N-carbamoyl-L-aspartate + phosphate + H(+). It participates in pyrimidine metabolism; UMP biosynthesis via de novo pathway; (S)-dihydroorotate from bicarbonate: step 2/3. Catalyzes the condensation of carbamoyl phosphate and aspartate to form carbamoyl aspartate and inorganic phosphate, the committed step in the de novo pyrimidine nucleotide biosynthesis pathway. The polypeptide is Aspartate carbamoyltransferase catalytic subunit (Anaeromyxobacter dehalogenans (strain 2CP-1 / ATCC BAA-258)).